We begin with the raw amino-acid sequence, 198 residues long: dITP/XTP pyrophosphatase (198 aa).

7 to 12 (THNPHK) is a binding site for substrate. 2 residues coordinate Mg(2+): Glu40 and Asp69. Asp69 acts as the Proton acceptor in catalysis. Substrate contacts are provided by residues Thr70, 151-154 (FGYD), Lys174, and 179-180 (HR).

Belongs to the HAM1 NTPase family. As to quaternary structure, homodimer. The cofactor is Mg(2+).

It carries out the reaction XTP + H2O = XMP + diphosphate + H(+). It catalyses the reaction dITP + H2O = dIMP + diphosphate + H(+). The catalysed reaction is ITP + H2O = IMP + diphosphate + H(+). Functionally, pyrophosphatase that catalyzes the hydrolysis of nucleoside triphosphates to their monophosphate derivatives, with a high preference for the non-canonical purine nucleotides XTP (xanthosine triphosphate), dITP (deoxyinosine triphosphate) and ITP. Seems to function as a house-cleaning enzyme that removes non-canonical purine nucleotides from the nucleotide pool, thus preventing their incorporation into DNA/RNA and avoiding chromosomal lesions. The chain is dITP/XTP pyrophosphatase from Thermoanaerobacter sp. (strain X514).